Here is a 257-residue protein sequence, read N- to C-terminus: MINPVAIRLGPFSIRWYAICIVSGMLLAVYLAMKEAPRKNIKSDDILDFILMAFPLSIVGARIYYVIFEWAYYSKHPVEIIAIWNGGIAIYGGLITGAILLVIFSYRRLINPIDFLDIAAPGVMIAQAIGRWGNFINQEAYGRAVKNLNYVPNFIKNQMYIDGAYRVPTFLYESLWNFLGFVIIMSIRHRPRTLKQGEVACFYLVWYGCGRFIIEGMRTDSLYLAGLRVSQWLSVILVIIGIVMIIYRRREQHISYY.

4 helical membrane passes run 12–32, 49–69, 83–103, and 109–129; these read FSIR…VYLA, FILM…VIFE, IWNG…LLVI, and LINP…AQAI. Residue Arg-131 participates in a 1,2-diacyl-sn-glycero-3-phospho-(1'-sn-glycerol) binding. 3 helical membrane passes run 167-187, 197-217, and 226-246; these read VPTF…IMSI, GEVA…IEGM, and GLRV…VMII.

Belongs to the Lgt family.

The protein resides in the cell membrane. The catalysed reaction is L-cysteinyl-[prolipoprotein] + a 1,2-diacyl-sn-glycero-3-phospho-(1'-sn-glycerol) = an S-1,2-diacyl-sn-glyceryl-L-cysteinyl-[prolipoprotein] + sn-glycerol 1-phosphate + H(+). It participates in protein modification; lipoprotein biosynthesis (diacylglyceryl transfer). Functionally, catalyzes the transfer of the diacylglyceryl group from phosphatidylglycerol to the sulfhydryl group of the N-terminal cysteine of a prolipoprotein, the first step in the formation of mature lipoproteins. This Streptococcus agalactiae serotype Ia (strain ATCC 27591 / A909 / CDC SS700) protein is Phosphatidylglycerol--prolipoprotein diacylglyceryl transferase.